Consider the following 255-residue polypeptide: UPF0246 protein Cphy_1568 (255 aa).

The protein belongs to the UPF0246 family.

This Lachnoclostridium phytofermentans (strain ATCC 700394 / DSM 18823 / ISDg) (Clostridium phytofermentans) protein is UPF0246 protein Cphy_1568.